Here is an 89-residue protein sequence, read N- to C-terminus: Small ribosomal subunit protein uS15 (89 aa).

This sequence belongs to the universal ribosomal protein uS15 family. In terms of assembly, part of the 30S ribosomal subunit. Forms a bridge to the 50S subunit in the 70S ribosome, contacting the 23S rRNA.

Its function is as follows. One of the primary rRNA binding proteins, it binds directly to 16S rRNA where it helps nucleate assembly of the platform of the 30S subunit by binding and bridging several RNA helices of the 16S rRNA. Functionally, forms an intersubunit bridge (bridge B4) with the 23S rRNA of the 50S subunit in the ribosome. This chain is Small ribosomal subunit protein uS15, found in Janthinobacterium sp. (strain Marseille) (Minibacterium massiliensis).